Consider the following 374-residue polypeptide: P2Y purinoceptor 2 (374 aa).

At 1 to 32 (MAAGLDSWNSTINGTWEGDELGYKCRFNEDFK) the chain is on the extracellular side. 2 N-linked (GlcNAc...) asparagine glycosylation sites follow: Asn9 and Asn13. The helical transmembrane segment at 33-59 (YVLLPVSYGVVCVLGLCLNVVALYIFL) threads the bilayer. The Cytoplasmic portion of the chain corresponds to 60-70 (CRLKTWNASTT). Residues 71 to 93 (YMFHLAVSDSLYAASLPLLVYYY) form a helical membrane-spanning segment. Residues 94–110 (AQGDHWPFSTVLCKLVR) are Extracellular-facing. Cys106 and Cys183 form a disulfide bridge. The chain crosses the membrane as a helical span at residues 111 to 129 (FLFYTNLYCSILFLTCISV). Topologically, residues 130–152 (HRCLGVLRPLHSLSWGHARYARR) are cytoplasmic. Residues 153-172 (VAAVVWVLVLACQAPVLYFV) traverse the membrane as a helical segment. At 173-194 (TTSVRGTRITCHDTSARELFSH) the chain is on the extracellular side. The chain crosses the membrane as a helical span at residues 195 to 220 (FVAYSSVMLGLLFAVPFSIILVCYVL). Residues 221-245 (MARRLLKPAYGTTGLPRAKRKSVRT) lie on the Cytoplasmic side of the membrane. The helical transmembrane segment at 246–268 (IALVLAVFALCFLPFHVTRTLYY) threads the bilayer. The Extracellular portion of the chain corresponds to 269–286 (SFRSLDLSCHTLNAINMA). The chain crosses the membrane as a helical span at residues 287–308 (YKITRPLASANSCLDPVLYFLA). Residues 309–374 (GQRLVRFARD…AGSETKDIRL (66 aa)) are Cytoplasmic-facing. The disordered stretch occupies residues 318-374 (DAKPATEPTPSPQARRKLGLHRPNRTDTVRKDLSISSDDSRRTESTPAGSETKDIRL). A compositionally biased stretch (basic residues) spans 331-340 (ARRKLGLHRP). The span at 341–361 (NRTDTVRKDLSISSDDSRRTE) shows a compositional bias: basic and acidic residues.

Belongs to the G-protein coupled receptor 1 family.

It is found in the cell membrane. Receptor for ATP and UTP coupled to G-proteins that activate a phosphatidylinositol-calcium second messenger system. The affinity range is UTP = ATP &gt; ATP-gamma-S &gt;&gt; 2-methylthio-ATP = ADP. This chain is P2Y purinoceptor 2 (P2ry2), found in Rattus norvegicus (Rat).